We begin with the raw amino-acid sequence, 158 residues long: Urease accessory protein UreE (158 aa).

The protein belongs to the UreE family.

The protein resides in the cytoplasm. Functionally, involved in urease metallocenter assembly. Binds nickel. Probably functions as a nickel donor during metallocenter assembly. This Corynebacterium urealyticum (strain ATCC 43042 / DSM 7109) protein is Urease accessory protein UreE.